The primary structure comprises 616 residues: Chaperone protein HscA homolog (616 aa).

The protein belongs to the heat shock protein 70 family.

Chaperone involved in the maturation of iron-sulfur cluster-containing proteins. Has a low intrinsic ATPase activity which is markedly stimulated by HscB. The chain is Chaperone protein HscA homolog from Vibrio cholerae serotype O1 (strain M66-2).